The primary structure comprises 190 residues: Molybdenum cofactor guanylyltransferase (190 aa).

GTP contacts are provided by residues 10–12, Lys-23, Asn-51, Asp-69, and Asp-99; that span reads LAG. Asp-99 is a Mg(2+) binding site.

This sequence belongs to the MobA family. Monomer. The cofactor is Mg(2+).

The protein localises to the cytoplasm. It carries out the reaction Mo-molybdopterin + GTP + H(+) = Mo-molybdopterin guanine dinucleotide + diphosphate. Transfers a GMP moiety from GTP to Mo-molybdopterin (Mo-MPT) cofactor (Moco or molybdenum cofactor) to form Mo-molybdopterin guanine dinucleotide (Mo-MGD) cofactor. The protein is Molybdenum cofactor guanylyltransferase of Mannheimia succiniciproducens (strain KCTC 0769BP / MBEL55E).